Consider the following 447-residue polypeptide: Argininosuccinate synthase (447 aa).

ATP is bound by residues 17–25 and Ala-43; that span reads AFSGGLDTS. Residue Tyr-99 participates in L-citrulline binding. ATP-binding residues include Gly-129 and Thr-131. L-aspartate is bound by residues Thr-131, Asn-135, and Asp-136. Residue Asn-135 participates in L-citrulline binding. An ATP-binding site is contributed by Asp-136. Residues Arg-139 and Ser-192 each coordinate L-citrulline. Asp-194 is an ATP binding site. Positions 201, 203, and 280 each coordinate L-citrulline.

The protein belongs to the argininosuccinate synthase family. Type 2 subfamily. In terms of assembly, homotetramer.

The protein resides in the cytoplasm. The enzyme catalyses L-citrulline + L-aspartate + ATP = 2-(N(omega)-L-arginino)succinate + AMP + diphosphate + H(+). The protein operates within amino-acid biosynthesis; L-arginine biosynthesis; L-arginine from L-ornithine and carbamoyl phosphate: step 2/3. The sequence is that of Argininosuccinate synthase from Escherichia coli O8 (strain IAI1).